Consider the following 722-residue polypeptide: Biotin--protein ligase (722 aa).

Residues 27–93 form a disordered region; that stretch reads KELGKASDKQ…EPAADGDPGL (67 aa). Residues 46–55 show a composition bias toward low complexity; sequence ASPEAQPAQG. Phosphoserine is present on Ser-295. Positions 459 to 648 constitute a BPL/LPL catalytic domain; the sequence is TRLGKVILFA…VLEKLIDRFQ (190 aa).

It belongs to the biotin--protein ligase family. As to quaternary structure, monomer.

Its subcellular location is the cytoplasm. The protein resides in the mitochondrion. It carries out the reaction apo-[methylmalonyl-CoA:pyruvate carboxytransferase] + biotin + ATP = holo-[methylmalonyl-CoA:pyruvate carboxytransferase] + AMP + diphosphate + H(+). It catalyses the reaction apo-[propionyl-CoA:carbon-dioxide ligase (ADP-forming)] + biotin + ATP = holo-[propionyl-CoA:carbon-dioxide ligase (ADP-forming)] + AMP + diphosphate + H(+). The enzyme catalyses apo-[3-methylcrotonoyl-CoA:carbon-dioxide ligase (ADP-forming)] + biotin + ATP = holo-[3-methylcrotonoyl-CoA:carbon-dioxide ligase (ADP-forming)] + AMP + diphosphate + H(+). The catalysed reaction is biotin + L-lysyl-[protein] + ATP = N(6)-biotinyl-L-lysyl-[protein] + AMP + diphosphate + H(+). Its function is as follows. Biotin--protein ligase catalyzing the biotinylation of the 4 biotin-dependent carboxylases acetyl-CoA-carboxylase, pyruvate carboxylase, propionyl-CoA carboxylase, and methylcrotonyl-CoA carboxylase. The chain is Biotin--protein ligase from Mus musculus (Mouse).